Consider the following 225-residue polypeptide: Putative O-phosphotransferase MT2714 (225 aa).

An ATP-binding site is contributed by Gly30–Thr37.

This sequence to S.violaceus chloramphenicol 3-O phosphotransferase.

This Mycobacterium tuberculosis (strain CDC 1551 / Oshkosh) protein is Putative O-phosphotransferase MT2714.